An 83-amino-acid chain; its full sequence is MADAAPADVKKLSFERAMEELETIVKRLEDGKVPLEESVAIYERGEALKRRCDELLRQAEARVDKITTDAQGKPVGTEPLDVQ.

The protein belongs to the XseB family. As to quaternary structure, heterooligomer composed of large and small subunits.

The protein resides in the cytoplasm. It catalyses the reaction Exonucleolytic cleavage in either 5'- to 3'- or 3'- to 5'-direction to yield nucleoside 5'-phosphates.. Bidirectionally degrades single-stranded DNA into large acid-insoluble oligonucleotides, which are then degraded further into small acid-soluble oligonucleotides. This Rhodopseudomonas palustris (strain BisB5) protein is Exodeoxyribonuclease 7 small subunit.